The sequence spans 138 residues: MAKPLPRIGSRKNRHMGSRKNVRRIPKGVIHVQASFNNTIVTVTDVRGRVISWSSAGTCGFKGTKRGTPFAAQTAAGNAIRTVVDQGMQRAEVMIKGPGLGRDAALRAIRRSGILLSFIRDVTPMPHNGCRPPKKRRV.

This sequence belongs to the universal ribosomal protein uS11 family. In terms of assembly, part of the 30S ribosomal subunit.

The protein localises to the plastid. Its subcellular location is the chloroplast. This is Small ribosomal subunit protein uS11c from Morus indica (Mulberry).